The following is a 202-amino-acid chain: MSRYTGPKIRIIRRLGELPALTTKKVKNNYPPGREWSTNEELSEYAIRLQEKQKIRFNYGINEKQLRRYVKKAKKSRGSTGSYLLNLLEMRLDNIVLRAGLAPTIAASRQLVSHKHIEVNNKIVNIPSFQCSIGDTIHVKKSNKSRQLIDLNSRRDTTKFFPKYLEVNKDNMGARVVKTMDKQDVNLTINELLVVEFYSRKG.

The S4 RNA-binding domain maps to 90–152; that stretch reads MRLDNIVLRA…NKSRQLIDLN (63 aa).

It belongs to the universal ribosomal protein uS4 family. As to quaternary structure, part of the 30S ribosomal subunit. Contacts protein S5. The interaction surface between S4 and S5 is involved in control of translational fidelity.

The protein resides in the plastid. It is found in the chloroplast. Functionally, one of the primary rRNA binding proteins, it binds directly to 16S rRNA where it nucleates assembly of the body of the 30S subunit. Its function is as follows. With S5 and S12 plays an important role in translational accuracy. This is Small ribosomal subunit protein uS4c-1 from Cyanidium caldarium (Red alga).